Consider the following 269-residue polypeptide: Shikimate dehydrogenase (NADP(+)) (269 aa).

Shikimate contacts are provided by residues 14–16 (TLS) and T60. K64 functions as the Proton acceptor in the catalytic mechanism. Position 76 (D76) interacts with NADP(+). N85 and D100 together coordinate shikimate. NADP(+) is bound by residues 122–126 (GAGGA) and M208. Y210 contacts shikimate. G232 contributes to the NADP(+) binding site.

Belongs to the shikimate dehydrogenase family. Homodimer.

It catalyses the reaction shikimate + NADP(+) = 3-dehydroshikimate + NADPH + H(+). It functions in the pathway metabolic intermediate biosynthesis; chorismate biosynthesis; chorismate from D-erythrose 4-phosphate and phosphoenolpyruvate: step 4/7. In terms of biological role, involved in the biosynthesis of the chorismate, which leads to the biosynthesis of aromatic amino acids. Catalyzes the reversible NADPH linked reduction of 3-dehydroshikimate (DHSA) to yield shikimate (SA). This is Shikimate dehydrogenase (NADP(+)) from Caldivirga maquilingensis (strain ATCC 700844 / DSM 13496 / JCM 10307 / IC-167).